A 43-amino-acid chain; its full sequence is Photosystem I reaction center subunit IX (43 aa).

A helical transmembrane segment spans residues 7–27 (YLSTAPVLSTIWFGSLAGLLI).

The protein belongs to the PsaJ family.

The protein resides in the plastid. Its subcellular location is the chloroplast thylakoid membrane. Its function is as follows. May help in the organization of the PsaE and PsaF subunits. The sequence is that of Photosystem I reaction center subunit IX from Vitis vinifera (Grape).